The chain runs to 192 residues: Putative 3-methyladenine DNA glycosylase (192 aa).

It belongs to the DNA glycosylase MPG family.

This chain is Putative 3-methyladenine DNA glycosylase, found in Methanoculleus marisnigri (strain ATCC 35101 / DSM 1498 / JR1).